Here is a 421-residue protein sequence, read N- to C-terminus: 2',3'-cyclic-nucleotide 3'-phosphodiesterase (421 aa).

Phosphoserine is present on residues S6 and S9. Y110 is subject to Phosphotyrosine. A Phosphoserine modification is found at S170. Catalysis depends on H251, which acts as the Proton acceptor. Substrate is bound at residue T253. H330 functions as the Proton donor in the catalytic mechanism. T332 provides a ligand contact to substrate. S359 is modified (phosphoserine). Cysteine methyl ester is present on C418. A lipid anchor (S-farnesyl cysteine) is attached at C418. Positions 419–421 are cleaved as a propeptide — removed in mature form; that stretch reads TII.

The protein belongs to the 2H phosphoesterase superfamily. CNPase family. In terms of assembly, exists as monomers and homodimers.

The protein localises to the membrane. The protein resides in the melanosome. It catalyses the reaction a nucleoside 2',3'-cyclic phosphate + H2O = a nucleoside 2'-phosphate + H(+). Its function is as follows. Catalyzes the formation of 2'-nucleotide products from 2',3'-cyclic substrates. May participate in RNA metabolism in the myelinating cell, CNP is the third most abundant protein in central nervous system myelin. The sequence is that of 2',3'-cyclic-nucleotide 3'-phosphodiesterase from Homo sapiens (Human).